Reading from the N-terminus, the 107-residue chain is DNA polymerase delta subunit 4 (107 aa).

The PCNA-interaction protein motif (PIP box) motif lies at 1-16; that stretch reads MGRKRLITDSYPVVKR. The tract at residues 1–35 is disordered; sequence MGRKRLITDSYPVVKRREGSAGHSKGELAPDLGEE. The span at 15-28 shows a compositional bias: basic and acidic residues; that stretch reads KRREGSAGHSKGEL.

Belongs to the DNA polymerase delta subunit 4 family. Component of the tetrameric DNA polymerase delta complex (Pol-delta4), which consists of POLD1/p125, POLD2/p50, POLD3/p66/p68 and POLD4/p12, with POLD1 bearing DNA polymerase and 3' to 5' proofreading exonuclease activities. Within this complex, directly interacts with POLD1 and POLD2. Directly interacts with PCNA, as do POLD1 and POLD3; this interaction stimulates Pol-delta4 polymerase activity. As POLD1 and POLD2, directly interacts with WRNIP1; this interaction stimulates DNA polymerase delta-mediated DNA synthesis, independently of the presence of PCNA, possibly by increasing initiation frequency. Upon genotoxic stress induced by DNA damaging agents or by replication stress, POLD4 is proteolytically degraded and Pol-delta4 is converted into a trimeric form of the complex (Pol-delta3) that has an increased proofreading activity. The DNA polymerase delta complex interacts with POLDIP2; this interaction is probably mediated through direct binding to POLD2. Ubiquitinated; undergoes 'Lys-48'-linked ubiquitination in response to UV irradiation, leading to proteasomal degradation. This modification is partly mediated by RNF8 and by the DCX(DTL) E3 ubiquitin ligase complex (also called CRL4(CDT2)). Efficient degradation requires the presence of PCNA and is required for the inhibition of fork progression after DNA damage.

Its subcellular location is the nucleus. Functionally, as a component of the tetrameric DNA polymerase delta 4 complex (Pol-delta4), plays a role in high fidelity genome replication and repair. Within this complex, increases the rate of DNA synthesis and decreases fidelity by regulating POLD1 polymerase and proofreading 3' to 5' exonuclease activity. Pol-delta4 participates in Okazaki fragment processing, through both the short flap pathway, as well as a nick translation system. Under conditions of DNA replication stress, required for the repair of broken replication forks through break-induced replication (BIR), a mechanism that may induce segmental genomic duplications of up to 200 kb. Involved in Pol-delta4 translesion synthesis (TLS) of templates carrying O6-methylguanine or abasic sites. Its degradation in response to DNA damage is required for the inhibition of fork progression and cell survival. This is DNA polymerase delta subunit 4 (POLD4) from Bos taurus (Bovine).